A 502-amino-acid chain; its full sequence is Putative F-box/FBD/LRR-repeat protein At5g22610 (502 aa).

Residues 17–63 form the F-box domain; it reads EDLISKLPEVLLSQILSYLPTKDIVRTSVLSKRWKSVWLLIPGLDLD. LRR repeat units follow at residues 70–98, 99–127, 147–180, 181–206, 208–228, 238–263, and 344–373; these read YDTFVDFMNEFLFFSREENPCLHKLKLSI, QKNENDPSCVTLWTDCVARGKLQHLDVEF, CKTLLHLRLYRVLLGNFDQSVDSLPSLKSMCLEE, NVYSNEASLESLISSCRVLEDLTIVK, DDNVRFLRVHSQSLTSLSVGY, YYYDRDRGNSGLVIDAPRLKYLTFNN, and SVWLSSFDFLDILPKLLESCPNLKSIVLET. Positions 384–435 constitute an FBD domain; the sequence is VERRVSSVPECLLSSLEFVEIKNRISVDDGALEVARYFVENSVNLQKVVLRL.

In Arabidopsis thaliana (Mouse-ear cress), this protein is Putative F-box/FBD/LRR-repeat protein At5g22610.